We begin with the raw amino-acid sequence, 55 residues long: Large ribosomal subunit protein bL33 (55 aa).

Belongs to the bacterial ribosomal protein bL33 family.

The sequence is that of Large ribosomal subunit protein bL33 from Alcanivorax borkumensis (strain ATCC 700651 / DSM 11573 / NCIMB 13689 / SK2).